Here is a 1272-residue protein sequence, read N- to C-terminus: Myosin-3 (1272 aa).

Residues 1 to 20 (MAVIKKGARRKDVKEPKKRS) are disordered. In terms of domain architecture, Myosin motor spans 36 to 715 (VGISDLTLLS…SLFALEDMRD (680 aa)). 129-136 (GESGAGKT) contacts ATP. Position 357 is a phosphoserine (Ser357). An actin-binding region spans residues 588–610 (ANELVETLSKAEPSYIRTIKPNQ). 2 IQ domains span residues 719-739 (YNMA…RIDA) and 740-765 (AIKI…YGTK). A TH1 domain is found at 771–961 (KERRSMSLLG…TIYVRRGHPA (191 aa)). 3 disordered regions span residues 951–1015 (STIY…QKPV), 1029–1141 (YNPK…SELP), and 1217–1272 (VQFG…DDDW). The span at 980–1000 (IKSKKSKHKSTHKHTHSHRSH) shows a compositional bias: basic residues. The span at 1066 to 1078 (KKASSSHKSSSAK) shows a compositional bias: low complexity. The span at 1089–1098 (GVEKNKEPLK) shows a compositional bias: basic and acidic residues. Positions 1109–1118 (PIPPPPPPMG) are enriched in pro residues. Residues 1120-1182 (PKDPKFEAAY…PTAYMTPYKD (63 aa)) form the SH3 domain. A compositionally biased stretch (polar residues) spans 1217 to 1236 (VQFGSATVGPTSDNQSNPVG). The span at 1258–1272 (ADDDDNDDGDDDDDW) shows a compositional bias: acidic residues.

This sequence belongs to the TRAFAC class myosin-kinesin ATPase superfamily. Myosin family. Interacts (via myosin motor domain) with SHE4; this interaction is important for proper localization and may regulate the interaction of the motor domain with actin. Interacts (via SH3 domain) with VRP1; this interaction is required for localization to sites of polarized growth and may regulate the interaction of the tail domain with actin. Interacts (via SH3 domain) with PAN1; this interaction is important for late stages of endocytopsis. Interacts (via SH3 domain) with BBC1 and LAS17. Interacts (via C-terminal acidic tail) with ARC19 and ARC40; ARC19 and ARC40 are Arp2/3 complex subunits. In terms of processing, phosphorylation of the TEDS site (Ser-357) is required for the polarization of the actin cytoskeleton and for ligand-induced, but not for constitutive internalization of STE2. Phosphorylation probably activates the myosin-I ATPase. Ser-357 is phosphorylated by CLA4 and STE20 in vitro.

It localises to the cytoplasm. It is found in the cytoskeleton. Its subcellular location is the actin patch. Its function is as follows. One of two redundant type-I myosins implicated in the organization of the actin cytoskeleton. Required for proper actin cytoskeleton polarization and for the internalization step in endocytosis. At the cell cortex, assembles in patch-like structures together with proteins from the actin-polymerizing machinery and promotes actin assembly. Functions redundantly with LAS17 as actin nucleation-promoting factor (NPF) for the Arp2/3 complex. Motor domain phosphorylation by PAK kinases CLA4 and STE20 promotes CDC42-regulated actin assembly. Functions together with the NPF PAN1 in late stages of endocytosis. Motor domain phosphorylation by PDK1 kinases PKH1 and PKH2, and by SGK kinases YPK1 and YPK2, promotes ligand-induced, but not constitutive endocytosis of the G protein-coupled receptor STE2. The polypeptide is Myosin-3 (MYO3) (Saccharomyces cerevisiae (strain ATCC 204508 / S288c) (Baker's yeast)).